We begin with the raw amino-acid sequence, 386 residues long: V-type proton ATPase subunit B 2 (386 aa).

This sequence belongs to the ATPase alpha/beta chains family. V-ATPase is a heteromultimeric enzyme composed of a peripheral catalytic V1 complex (main components: subunits A, B, C, D, E, and F) attached to an integral membrane V0 proton pore complex (main component: the proteolipid protein).

Its function is as follows. Non-catalytic subunit of the peripheral V1 complex of vacuolar ATPase. V-ATPase is responsible for acidifying a variety of intracellular compartments in eukaryotic cells. In Gossypium hirsutum (Upland cotton), this protein is V-type proton ATPase subunit B 2.